A 492-amino-acid polypeptide reads, in one-letter code: Phosphatidylglycerol--prolipoprotein diacylglyceryl transferase (492 aa).

9 helical membrane-spanning segments follow: residues 40–60 (IFGIGWALLFLLIAVLAYVGW), 72–92 (AIRQIAGFAVMAAVILVVVVP), 106–126 (VAVRGYGMFLMLAAIASVGLA), 133–153 (AGLGADSILQLAPWTFIGGLL), 184–204 (QGGLVVYGGFIGGFIASLIAL), 214–234 (IGDVIIPCVFVGLLFGRLGCL), 361–381 (VWGTQIISSVFAAIMFVVLLI), 409–429 (GVLMLVGFIAYGVLRIVLEWI), and 441–461 (LSISQWVSLVVIAASLVTLFI). Arginine 230 provides a ligand contact to a 1,2-diacyl-sn-glycero-3-phospho-(1'-sn-glycerol).

Belongs to the Lgt family.

It localises to the cell inner membrane. The enzyme catalyses L-cysteinyl-[prolipoprotein] + a 1,2-diacyl-sn-glycero-3-phospho-(1'-sn-glycerol) = an S-1,2-diacyl-sn-glyceryl-L-cysteinyl-[prolipoprotein] + sn-glycerol 1-phosphate + H(+). Its pathway is protein modification; lipoprotein biosynthesis (diacylglyceryl transfer). Catalyzes the transfer of the diacylglyceryl group from phosphatidylglycerol to the sulfhydryl group of the N-terminal cysteine of a prolipoprotein, the first step in the formation of mature lipoproteins. The protein is Phosphatidylglycerol--prolipoprotein diacylglyceryl transferase of Rhodopirellula baltica (strain DSM 10527 / NCIMB 13988 / SH1).